The primary structure comprises 532 residues: Membrane protein insertase YidC (532 aa).

5 consecutive transmembrane segments (helical) span residues 7 to 27 (FFIF…QSQM), 336 to 356 (LTIL…ITFI), 413 to 433 (GGFL…YMLI), 450 to 470 (LSSQ…MFFI), and 492 to 512 (PVIF…YYII).

It belongs to the OXA1/ALB3/YidC family. Type 1 subfamily. As to quaternary structure, interacts with the Sec translocase complex via SecD. Specifically interacts with transmembrane segments of nascent integral membrane proteins during membrane integration.

The protein localises to the cell membrane. Functionally, required for the insertion and/or proper folding and/or complex formation of integral membrane proteins into the membrane. Involved in integration of membrane proteins that insert both dependently and independently of the Sec translocase complex, as well as at least some lipoproteins. Aids folding of multispanning membrane proteins. This chain is Membrane protein insertase YidC, found in Buchnera aphidicola subsp. Acyrthosiphon pisum (strain 5A).